Here is a 360-residue protein sequence, read N- to C-terminus: Cyclin-dependent kinase 10 (360 aa).

One can recognise a Protein kinase domain in the interval 39 to 323; it reads FEKLNRIGEG…AGDCLESSYF (285 aa). ATP is bound by residues 45 to 53 and K68; that span reads IGEGTYGIV. The Proton acceptor role is filled by D163. At T196 the chain carries Phosphothreonine. The interval 334 to 360 is disordered; it reads LMPTFPHHRNKRAAPATSEGQSKRCKP.

Belongs to the protein kinase superfamily. CMGC Ser/Thr protein kinase family. CDC2/CDKX subfamily. Heterodimer with CCNQ, the interaction is required for kinase activity. Interacts with ETS2. Interacts with PRK2.

Its subcellular location is the cytoplasm. The protein resides in the cytoskeleton. It localises to the cilium basal body. It carries out the reaction L-seryl-[protein] + ATP = O-phospho-L-seryl-[protein] + ADP + H(+). The catalysed reaction is L-threonyl-[protein] + ATP = O-phospho-L-threonyl-[protein] + ADP + H(+). Functionally, cyclin-dependent kinase that phosphorylates the transcription factor ETS2 (in vitro) and positively controls its proteasomal degradation (in cells). Involved in the regulation of actin cytoskeleton organization through the phosphorylation of actin dynamics regulators such as PKN2. Is a negative regulator of ciliogenesis through phosphorylation of PKN2 and promotion of RhoA signaling. The sequence is that of Cyclin-dependent kinase 10 (CDK10) from Homo sapiens (Human).